We begin with the raw amino-acid sequence, 342 residues long: tRNA N6-adenosine threonylcarbamoyltransferase (342 aa).

Positions 111 and 115 each coordinate Fe cation. Substrate is bound by residues 134–138 (LVSGG), D167, G180, and N277. D305 contacts Fe cation.

Belongs to the KAE1 / TsaD family. Fe(2+) serves as cofactor.

The protein resides in the cytoplasm. The enzyme catalyses L-threonylcarbamoyladenylate + adenosine(37) in tRNA = N(6)-L-threonylcarbamoyladenosine(37) in tRNA + AMP + H(+). Required for the formation of a threonylcarbamoyl group on adenosine at position 37 (t(6)A37) in tRNAs that read codons beginning with adenine. Is involved in the transfer of the threonylcarbamoyl moiety of threonylcarbamoyl-AMP (TC-AMP) to the N6 group of A37, together with TsaE and TsaB. TsaD likely plays a direct catalytic role in this reaction. The chain is tRNA N6-adenosine threonylcarbamoyltransferase from Histophilus somni (strain 2336) (Haemophilus somnus).